A 64-amino-acid chain; its full sequence is Large ribosomal subunit protein uL29 (64 aa).

Belongs to the universal ribosomal protein uL29 family.

The sequence is that of Large ribosomal subunit protein uL29 from Verminephrobacter eiseniae (strain EF01-2).